The sequence spans 229 residues: MTTMAETQTWQTVLGEEKQEPYFQEILDFVKKERKAGKIIYPPQKDIFNALKLTPYEAVKVVILGQDPYHGPNQAHGLAFSVRPGVPAPPSLQNIFKELHADLGVSIPSHGFLEKWAKQGVLLLNAALTVEAGKPQSHANIGWHRFTDKVIESLNDHPEGIVFLLWGSYAQKKSQLITNLRHRILKAPHPSPLSAARGFLGCRHFSKANQLLHEMGRGEIDWALDEKVS.

Asp-67 functions as the Proton acceptor in the catalytic mechanism.

Belongs to the uracil-DNA glycosylase (UDG) superfamily. UNG family.

It is found in the cytoplasm. It carries out the reaction Hydrolyzes single-stranded DNA or mismatched double-stranded DNA and polynucleotides, releasing free uracil.. Excises uracil residues from the DNA which can arise as a result of misincorporation of dUMP residues by DNA polymerase or due to deamination of cytosine. In Coxiella burnetii (strain CbuK_Q154) (Coxiella burnetii (strain Q154)), this protein is Uracil-DNA glycosylase.